The chain runs to 198 residues: MAVADPIARLVKELAKLPGIGEKTAQRLAFHILKAGAGYAGDLAAAIAGVVRDVRLCSTCQTLTDQDPCAICRDPERDARMICVVEGVPDLLAVERTHEFRGRYHVLHGALSPLDGVGPSDLKIRELLVRLEREPADEIVVATNPDVEGEATALYLTKLLKPMGLKVTRIAQGVPMGGDLEYADQVTLARALAGRREL.

A C4-type zinc finger spans residues 57-72 (CSTCQTLTDQDPCAIC). Residues 80 to 175 (RMICVVEGVP…KVTRIAQGVP (96 aa)) form the Toprim domain.

This sequence belongs to the RecR family.

In terms of biological role, may play a role in DNA repair. It seems to be involved in an RecBC-independent recombinational process of DNA repair. It may act with RecF and RecO. The polypeptide is Recombination protein RecR (Anaeromyxobacter dehalogenans (strain 2CP-C)).